Reading from the N-terminus, the 121-residue chain is Flagellar hook-basal body complex protein FliE (121 aa).

The protein belongs to the FliE family.

The protein localises to the bacterial flagellum basal body. The polypeptide is Flagellar hook-basal body complex protein FliE (Treponema denticola (strain ATCC 35405 / DSM 14222 / CIP 103919 / JCM 8153 / KCTC 15104)).